A 176-amino-acid chain; its full sequence is MNIVNSKILFLSFTLLLLLQSSIVESDSICLSSGVASTVAMAAPGSVQKGDEEWRAILSPEQFRILRQKGTEYPGTGEYVNFDKEGVYGCVGCNAPLYKSTTKFNAGCGWPAFFEGIPGAITRTTDPDGRRIEINCATCGGHLGHVFKGEGFATPTDERHCVNSVSLKFTPAASSL.

A signal peptide spans 1–26; it reads MNIVNSKILFLSFTLLLLLQSSIVES. The region spanning 51–172 is the MsrB domain; it reads DEEWRAILSP…NSVSLKFTPA (122 aa). Zn(2+)-binding residues include cysteine 90, cysteine 93, cysteine 136, and cysteine 139. A disulfide bond links cysteine 108 and cysteine 161. The active-site Nucleophile is cysteine 161.

Belongs to the MsrB Met sulfoxide reductase family. The cofactor is Zn(2+).

Its subcellular location is the endoplasmic reticulum. The catalysed reaction is L-methionyl-[protein] + [thioredoxin]-disulfide + H2O = L-methionyl-(R)-S-oxide-[protein] + [thioredoxin]-dithiol. In terms of biological role, catalyzes the reduction of methionine sulfoxide (MetSO) to methionine in proteins. Plays a protective role against oxidative stress by restoring activity to proteins that have been inactivated by methionine oxidation. Involved in cold tolerance. Eliminates MetSO and reactive oxygen species that accumulate at the ER during cold acclimation. MSRB family specifically reduces the MetSO R-enantiomer. The polypeptide is Peptide methionine sulfoxide reductase B3 (MSRB3) (Arabidopsis thaliana (Mouse-ear cress)).